A 579-amino-acid chain; its full sequence is Nuclear hormone receptor family member nhr-71 (579 aa).

The segment at residues 8-83 (SQECMVCSAP…AGMKIGAVQP (76 aa)) is a DNA-binding region (nuclear receptor). 2 consecutive NR C4-type zinc fingers follow at residues 11 to 31 (CMVC…CRSC) and 47 to 71 (CKHT…FTKC). 2 disordered regions span residues 82–124 (QPRR…SDGP) and 168–189 (EPIP…PNDD). Polar residues-rich tracts occupy residues 106–124 (SMNN…SDGP) and 171–186 (PSTS…QSSP). The NR LBD domain occupies 189–452 (DEQQEFNHLV…KFWYETLCYA (264 aa)).

This sequence belongs to the nuclear hormone receptor family.

Its subcellular location is the nucleus. Orphan nuclear receptor. The chain is Nuclear hormone receptor family member nhr-71 (nhr-71) from Caenorhabditis elegans.